The following is a 365-amino-acid chain: Histidinol-phosphate aminotransferase (365 aa).

Lys-223 carries the post-translational modification N6-(pyridoxal phosphate)lysine.

This sequence belongs to the class-II pyridoxal-phosphate-dependent aminotransferase family. Histidinol-phosphate aminotransferase subfamily. As to quaternary structure, homodimer. Requires pyridoxal 5'-phosphate as cofactor.

The enzyme catalyses L-histidinol phosphate + 2-oxoglutarate = 3-(imidazol-4-yl)-2-oxopropyl phosphate + L-glutamate. It participates in amino-acid biosynthesis; L-histidine biosynthesis; L-histidine from 5-phospho-alpha-D-ribose 1-diphosphate: step 7/9. This is Histidinol-phosphate aminotransferase from Bacillus pumilus (strain SAFR-032).